We begin with the raw amino-acid sequence, 462 residues long: Cytochrome P450 20A1 (462 aa).

Residues F4–P24 traverse the membrane as a helical segment. C409 serves as a coordination point for heme.

This sequence belongs to the cytochrome P450 family. Requires heme as cofactor.

The protein resides in the membrane. In Homo sapiens (Human), this protein is Cytochrome P450 20A1 (CYP20A1).